Here is a 97-residue protein sequence, read N- to C-terminus: UPF0223 protein lp_2149 (97 aa).

The protein belongs to the UPF0223 family.

This Lactiplantibacillus plantarum (strain ATCC BAA-793 / NCIMB 8826 / WCFS1) (Lactobacillus plantarum) protein is UPF0223 protein lp_2149.